We begin with the raw amino-acid sequence, 191 residues long: UPF0149 protein VV1_1551 (191 aa).

It belongs to the UPF0149 family.

The sequence is that of UPF0149 protein VV1_1551 from Vibrio vulnificus (strain CMCP6).